Here is a 209-residue protein sequence, read N- to C-terminus: Uracil phosphoribosyltransferase (209 aa).

Residues Arg-79, Arg-104, and Asp-131 to Ser-139 contribute to the 5-phospho-alpha-D-ribose 1-diphosphate site. Uracil contacts are provided by residues Ile-194 and Gly-199–Ala-201. Position 200 (Asp-200) interacts with 5-phospho-alpha-D-ribose 1-diphosphate.

Belongs to the UPRTase family. It depends on Mg(2+) as a cofactor.

The enzyme catalyses UMP + diphosphate = 5-phospho-alpha-D-ribose 1-diphosphate + uracil. The protein operates within pyrimidine metabolism; UMP biosynthesis via salvage pathway; UMP from uracil: step 1/1. With respect to regulation, allosterically activated by GTP. Its function is as follows. Catalyzes the conversion of uracil and 5-phospho-alpha-D-ribose 1-diphosphate (PRPP) to UMP and diphosphate. In Alkaliphilus metalliredigens (strain QYMF), this protein is Uracil phosphoribosyltransferase.